The following is an 813-amino-acid chain: Sorting nexin-29 (813 aa).

Positions 36-180 (SDSDSRVTCL…ILFAINIDNK (145 aa)) constitute an RUN domain. Residues S268, S291, S292, S330, and S344 each carry the phosphoserine modification. Positions 269–299 (FDDEEDEQNSGDVFKKTPGAGESSEDNSDRS) are disordered. Over residues 346–357 (DDEDVDENEDDV) the composition is skewed to acidic residues. Positions 346 to 378 (DDEDVDENEDDVYGNSSGRKHRGHSESPEKPLE) are disordered. Residues S445 and S450 each carry the phosphoserine modification. The stretch at 466–545 (TISELRQATV…VLKVQLKKYV (80 aa)) forms a coiled coil. S639 carries the post-translational modification Phosphoserine. Position 641 is a phosphothreonine (T641). 2 positions are modified to phosphoserine: S642 and S646. The PX domain maps to 656–779 (ALINVWIPSV…PFFVDITPPG (124 aa)). The segment at 778–813 (PGEPVNSRPKAASRFPKLSRGQPRETRNVEPQSGDL) is disordered.

It belongs to the sorting nexin family.

The chain is Sorting nexin-29 (SNX29) from Homo sapiens (Human).